The sequence spans 637 residues: Biosynthetic arginine decarboxylase (637 aa).

Residue Lys-101 is modified to N6-(pyridoxal phosphate)lysine. A substrate-binding site is contributed by 286-296 (FDVGGGLAVDY).

It belongs to the Orn/Lys/Arg decarboxylase class-II family. SpeA subfamily. Mg(2+) is required as a cofactor. It depends on pyridoxal 5'-phosphate as a cofactor.

It catalyses the reaction L-arginine + H(+) = agmatine + CO2. It functions in the pathway amine and polyamine biosynthesis; agmatine biosynthesis; agmatine from L-arginine: step 1/1. Functionally, catalyzes the biosynthesis of agmatine from arginine. The sequence is that of Biosynthetic arginine decarboxylase from Shewanella baltica (strain OS223).